A 378-amino-acid chain; its full sequence is Queuine tRNA-ribosyltransferase (378 aa).

The active-site Proton acceptor is Asp-89. Substrate is bound by residues 89 to 93 (DSGGF), Asp-143, Gln-187, and Gly-214. Residues 245–251 (GVGKPED) form an RNA binding region. The active-site Nucleophile is the Asp-264. An RNA binding; important for wobble base 34 recognition region spans residues 269–273 (TRNAR). Residues Cys-302, Cys-304, Cys-307, and His-333 each contribute to the Zn(2+) site.

Belongs to the queuine tRNA-ribosyltransferase family. In terms of assembly, homodimer. Within each dimer, one monomer is responsible for RNA recognition and catalysis, while the other monomer binds to the replacement base PreQ1. Zn(2+) serves as cofactor.

The catalysed reaction is 7-aminomethyl-7-carbaguanine + guanosine(34) in tRNA = 7-aminomethyl-7-carbaguanosine(34) in tRNA + guanine. It functions in the pathway tRNA modification; tRNA-queuosine biosynthesis. Functionally, catalyzes the base-exchange of a guanine (G) residue with the queuine precursor 7-aminomethyl-7-deazaguanine (PreQ1) at position 34 (anticodon wobble position) in tRNAs with GU(N) anticodons (tRNA-Asp, -Asn, -His and -Tyr). Catalysis occurs through a double-displacement mechanism. The nucleophile active site attacks the C1' of nucleotide 34 to detach the guanine base from the RNA, forming a covalent enzyme-RNA intermediate. The proton acceptor active site deprotonates the incoming PreQ1, allowing a nucleophilic attack on the C1' of the ribose to form the product. After dissociation, two additional enzymatic reactions on the tRNA convert PreQ1 to queuine (Q), resulting in the hypermodified nucleoside queuosine (7-(((4,5-cis-dihydroxy-2-cyclopenten-1-yl)amino)methyl)-7-deazaguanosine). This Yersinia enterocolitica serotype O:8 / biotype 1B (strain NCTC 13174 / 8081) protein is Queuine tRNA-ribosyltransferase.